We begin with the raw amino-acid sequence, 59 residues long: MAKTIKVTQVRSSIGRLPKHKATLLGLGLRRIGHTVEREDTPALRGMINLVSYMVKVEE.

This sequence belongs to the universal ribosomal protein uL30 family. In terms of assembly, part of the 50S ribosomal subunit.

This chain is Large ribosomal subunit protein uL30, found in Buchnera aphidicola subsp. Acyrthosiphon kondoi (Acyrthosiphon kondoi symbiotic bacterium).